We begin with the raw amino-acid sequence, 210 residues long: Large ribosomal subunit protein uL3 (210 aa).

The segment at 119–151 is disordered; that stretch reads FQGAIKRHGQSRGPMSHGSRYHRRPGSMGPVAP.

This sequence belongs to the universal ribosomal protein uL3 family. In terms of assembly, part of the 50S ribosomal subunit. Forms a cluster with proteins L14 and L19.

Functionally, one of the primary rRNA binding proteins, it binds directly near the 3'-end of the 23S rRNA, where it nucleates assembly of the 50S subunit. The chain is Large ribosomal subunit protein uL3 from Bacillus cytotoxicus (strain DSM 22905 / CIP 110041 / 391-98 / NVH 391-98).